Consider the following 229-residue polypeptide: MADITLAQLLEAGVHFGHKAYRWNPKMFPYIYTERNNIHILDLVQSAQLLKEANSYLQSAAEKGQTFLFIGTKPQASALIAQEAKRCNSYYVNHRWLGGMLTNWVTLKSRIARLKTLEQEEADQVFNLLPKKEASLRRKELEKLRKNLNGIKDMEKLPDVAIVIDQKREMTAVIECRKLGIPIISILDTNCDPDLVDIPIPGNDDAVGSIKLVLQSLTDSINTGKLTTK.

It belongs to the universal ribosomal protein uS2 family.

It localises to the plastid. Its subcellular location is the chloroplast. The chain is Small ribosomal subunit protein uS2c (rps2) from Trieres chinensis (Marine centric diatom).